The following is a 166-amino-acid chain: Putative 4-hydroxy-4-methyl-2-oxoglutarate aldolase (166 aa).

Substrate contacts are provided by residues 74–77 (GDQI) and Arg-96. Asp-97 provides a ligand contact to a divalent metal cation.

It belongs to the class II aldolase/RraA-like family. In terms of assembly, homotrimer. The cofactor is a divalent metal cation.

It catalyses the reaction 4-hydroxy-4-methyl-2-oxoglutarate = 2 pyruvate. It carries out the reaction oxaloacetate + H(+) = pyruvate + CO2. Catalyzes the aldol cleavage of 4-hydroxy-4-methyl-2-oxoglutarate (HMG) into 2 molecules of pyruvate. Also contains a secondary oxaloacetate (OAA) decarboxylase activity due to the common pyruvate enolate transition state formed following C-C bond cleavage in the retro-aldol and decarboxylation reactions. This is Putative 4-hydroxy-4-methyl-2-oxoglutarate aldolase from Xanthomonas campestris pv. campestris (strain B100).